Here is a 299-residue protein sequence, read N- to C-terminus: Fluorinase (299 aa).

S-adenosyl-L-methionine contacts are provided by residues Asp16, 21–23 (DDS), Tyr77, Ser158, Asp210, Asn215, 269–270 (SR), and 277–279 (RNA).

As to quaternary structure, homohexamer; dimers of trimer.

It carries out the reaction fluoride + S-adenosyl-L-methionine = 5'-deoxy-5'-fluoroadenosine + L-methionine. Its activity is regulated as follows. Competitively inhibited by S-adenosyl-L-homocysteine (AdoHcy) and S-adenosyl-L-homocysteine (SAH). Sinefungin is only weakly inhibitory. Involved in the biosynthesis of fluorometabolites. Catalyzes the formation of a C-F bond by combining S-adenosyl-L-methionine (SAM) and fluoride to generate 5'-fluoro-5'-deoxyadenosine (5'-FDA) and L-methionine. It can also use 2'-deoxyadenosine in place of adenosine as substrate. The chain is Fluorinase from Streptantibioticus cattleyicolor (Streptomyces cattleya).